Here is a 62-residue protein sequence, read N- to C-terminus: MAVPKRKTSPSRRGMRRSADALKAPTYVEDKDSGELRRPHHIDLKTGMYRGRQVLKVKSAEA.

Positions 1-16 are enriched in basic residues; it reads MAVPKRKTSPSRRGMR. A disordered region spans residues 1 to 44; it reads MAVPKRKTSPSRRGMRRSADALKAPTYVEDKDSGELRRPHHIDL. The span at 28 to 44 shows a compositional bias: basic and acidic residues; the sequence is VEDKDSGELRRPHHIDL.

This sequence belongs to the bacterial ribosomal protein bL32 family.

This is Large ribosomal subunit protein bL32 from Methylorubrum extorquens (strain CM4 / NCIMB 13688) (Methylobacterium extorquens).